A 144-amino-acid polypeptide reads, in one-letter code: MSSEDLAEIPQLQKLSIPHGFQNKEAASSPTPSITLSQVPDLQPGSQLFTEIHLAKIEKMFEEDINSTGALGMDAFIKAMKKVLSSVSDEMLKELFLKVDSDCEGFVTWQKYVDYMMREFQGKEDMRKSQYRLHFYLPMTVVPL.

2 EF-hand domains span residues 52–86 and 87–122; these read IHLA…VLSS and VSDE…EFQG.

In Homo sapiens (Human), this protein is EF-hand calcium-binding domain-containing protein 8 (EFCAB8).